The following is a 281-amino-acid chain: Pantothenate synthetase (281 aa).

30 to 37 serves as a coordination point for ATP; sequence MGNLHAGH. Residue His-37 is the Proton donor of the active site. Position 61 (Gln-61) interacts with (R)-pantoate. A beta-alanine-binding site is contributed by Gln-61. An ATP-binding site is contributed by 149–152; that stretch reads GRKD. Gln-155 provides a ligand contact to (R)-pantoate. Residues Val-178 and 186–189 contribute to the ATP site; that span reads MSSR.

The protein belongs to the pantothenate synthetase family. As to quaternary structure, homodimer.

Its subcellular location is the cytoplasm. It catalyses the reaction (R)-pantoate + beta-alanine + ATP = (R)-pantothenate + AMP + diphosphate + H(+). Its pathway is cofactor biosynthesis; (R)-pantothenate biosynthesis; (R)-pantothenate from (R)-pantoate and beta-alanine: step 1/1. Catalyzes the condensation of pantoate with beta-alanine in an ATP-dependent reaction via a pantoyl-adenylate intermediate. This chain is Pantothenate synthetase, found in Shewanella amazonensis (strain ATCC BAA-1098 / SB2B).